The chain runs to 428 residues: Lysophosphatidic acid phosphatase type 6 (428 aa).

Residues 1 to 32 (MITGVFSMRLWTPVGVLTSLAYCLHQRRVALA) constitute a mitochondrion transit peptide. Positions 58-168 (RHGARSPLKP…VFIRSTNIFR (111 aa)) are substrate binding. His59 serves as the catalytic Nucleophile. The active-site Proton donor is Asp335.

It belongs to the histidine acid phosphatase family. As to quaternary structure, monomer. In terms of tissue distribution, highly expressed in kidney, heart, small intestine, muscle, liver, prostate, testis, ovary and weakly expressed in thymus and colon.

The protein resides in the mitochondrion. The enzyme catalyses a phosphate monoester + H2O = an alcohol + phosphate. It carries out the reaction 1-(9Z-octadecenoyl)-sn-glycero-3-phosphate + H2O = 1-(9Z-octadecenoyl)-sn-glycerol + phosphate. Its function is as follows. Hydrolyzes lysophosphatidic acid (LPA) containing a medium length fatty acid chain to the corresponding monoacylglycerol. Has highest activity with lysophosphatidic acid containing myristate (C14:0), monounsaturated oleate (C18:1) or palmitate (C16:0), and lower activity with C18:0 and C6:0 lysophosphatidic acid. This chain is Lysophosphatidic acid phosphatase type 6 (ACP6), found in Homo sapiens (Human).